The primary structure comprises 1211 residues: A disintegrin and metalloproteinase with thrombospondin motifs 2 (1211 aa).

The N-terminal stretch at 1–29 is a signal peptide; the sequence is MDPPAGAARRLLCPALLLLLLLLPPPLLP. Positions 30–253 are excised as a propeptide; that stretch reads PPPPPANARL…GVLEEHANSS (224 aa). 2 N-linked (GlcNAc...) asparagine glycosylation sites follow: N112 and N251. Positions 266-470 constitute a Peptidase M12B domain; it reads YNIEVLLGVD…HSYDCLLDDP (205 aa). 10 cysteine pairs are disulfide-bonded: C343–C392, C386–C465, C425–C451, C492–C517, C503–C526, C512–C545, C539–C550, C573–C610, C577–C615, and C588–C600. H408 contacts Zn(2+). E409 is an active-site residue. 2 residues coordinate Zn(2+): H412 and H418. The Disintegrin domain maps to 480 to 560; it reads QLPGLHYSMN…IWLTPDILKR (81 aa). Residues 561–616 form the TSP type-1 1 domain; sequence DGSWGAWSPFGSCSRTCGTGVKFRTRQCDNPHPANGGRTCSGLAYDFQLCSRQDCP. The short motif at 691–693 is the Cell attachment site element; the sequence is RGD. The spacer stretch occupies residues 723–851; that stretch reads KVVKGTFTRS…NVDDNNVLEE (129 aa). TSP type-1 domains follow at residues 854–912, 914–971, and 975–1029; these read VVYE…NPQE, SQPV…RACS, and CPGR…GPCP. N-linked (GlcNAc...) asparagine glycans are attached at residues N949 and N993. Intrachain disulfides connect C987–C1023, C991–C1028, and C1002–C1012. An N-linked (GlcNAc...) asparagine glycan is attached at N1031. Positions 1059 to 1097 constitute a PLAC domain; it reads SKGHCQGDKSIFCRMEVLSRYCSIPGYNKLCCKSCNLYN. N-linked (GlcNAc...) asparagine glycosylation is found at N1098, N1145, and N1150. The segment at 1170-1191 is disordered; the sequence is LEDEVQPPNLIPRRPSPYEKTR.

In terms of assembly, may belong to a multimeric complex. Binds specifically to collagen type XIV. It depends on Zn(2+) as a cofactor. Post-translationally, the precursor is cleaved by a furin endopeptidase. Glycosylated. Can be O-fucosylated by POFUT2 on a serine or a threonine residue found within the consensus sequence C1-X(2)-(S/T)-C2-G of the TSP type-1 repeat domains where C1 and C2 are the first and second cysteine residue of the repeat, respectively. Fucosylated repeats can then be further glycosylated by the addition of a beta-1,3-glucose residue by the glucosyltransferase, B3GALTL. Fucosylation mediates the efficient secretion of ADAMTS family members. Can also be C-glycosylated with one or two mannose molecules on tryptophan residues within the consensus sequence W-X-X-W of the TPRs, and N-glycosylated. These other glycosylations can also facilitate secretion. Expressed at high level in skin, bone, tendon and aorta and at low levels in thymus and brain.

It is found in the secreted. The protein resides in the extracellular space. The protein localises to the extracellular matrix. The catalysed reaction is Cleaves the N-propeptide of collagen chain alpha1(I) at Pro-|-Gln and of alpha1(II) and alpha2(I) at Ala-|-Gln.. In terms of biological role, cleaves the propeptides of type I and II collagen prior to fibril assembly. Does not act on type III collagen. Cleaves lysyl oxidase LOX at a site downstream of its propeptide cleavage site to produce a short LOX form with reduced collagen-binding activity. The chain is A disintegrin and metalloproteinase with thrombospondin motifs 2 (ADAMTS2) from Homo sapiens (Human).